We begin with the raw amino-acid sequence, 224 residues long: SPI-2 type 3 secretion system stator protein (224 aa).

Belongs to the SctL stator family. As to quaternary structure, the core secretion machinery of the T3SS is composed of approximately 20 different proteins, including cytoplasmic components, a base, an export apparatus and a needle. This subunit is part of the cytosolic complex. Interacts directly with SsaN/SctN2 (T3SS-2 ATPase).

Its subcellular location is the cytoplasm. Its function is as follows. Component of the type III secretion system (T3SS), also called injectisome, which is used to inject bacterial effector proteins into eukaryotic host cells. Acts as a regulator of the SsaN/SctN2 ATPase activity. The sequence is that of SPI-2 type 3 secretion system stator protein from Salmonella typhimurium (strain LT2 / SGSC1412 / ATCC 700720).